The sequence spans 244 residues: Phosphoadenosine 5'-phosphosulfate reductase (244 aa).

Catalysis depends on C239, which acts as the Nucleophile; cysteine thiosulfonate intermediate.

This sequence belongs to the PAPS reductase family. CysH subfamily.

The protein localises to the cytoplasm. It carries out the reaction [thioredoxin]-disulfide + sulfite + adenosine 3',5'-bisphosphate + 2 H(+) = [thioredoxin]-dithiol + 3'-phosphoadenylyl sulfate. Its pathway is sulfur metabolism; hydrogen sulfide biosynthesis; sulfite from sulfate: step 3/3. Catalyzes the formation of sulfite from phosphoadenosine 5'-phosphosulfate (PAPS) using thioredoxin as an electron donor. The chain is Phosphoadenosine 5'-phosphosulfate reductase from Buchnera aphidicola subsp. Acyrthosiphon pisum (strain 5A).